The chain runs to 331 residues: DSC E3 ubiquitin ligase complex subunit D (331 aa).

Asparagine 26 is a glycosylation site (N-linked (GlcNAc...) asparagine). The next 3 helical transmembrane spans lie at 63–83 (ILIYCELSALYYMDCSVILFA), 107–127 (PFIGAIFVSNIFCMIFHNFFT), and 159–179 (LFLLDFLVLILDLVMLGLIVE). A disordered region spans residues 188 to 225 (STTSTEILRVQDHDSEERGVHRTRPESRSSVVGAELDE). Basic and acidic residues predominate over residues 196–214 (RVQDHDSEERGVHRTRPES).

Component of the DSC E3 ubiquitin ligase complex composed of dscA, dscB, dscC and dscD.

The protein localises to the endoplasmic reticulum membrane. Its pathway is protein modification; protein ubiquitination. Functionally, component of the DSC E3 ubiquitin ligase complex which is required for the srbA transcriptional activator proteolytic cleavage to release the soluble transcription factor from the membrane in low oxygen or sterol conditions. Required for growth during hypoxia and triazole drug susceptibility, as well as for virulence in a murine model of invasive pulmonary aspergillosis (IPA). This is DSC E3 ubiquitin ligase complex subunit D from Aspergillus fumigatus (strain ATCC MYA-4609 / CBS 101355 / FGSC A1100 / Af293) (Neosartorya fumigata).